Reading from the N-terminus, the 199-residue chain is uncharacterized protein (199 aa).

Residues 21 to 38 (ISPSATNFIVSLVIMILI) form a helical membrane-spanning segment.

The protein localises to the membrane. This is an uncharacterized protein from Saccharomyces cerevisiae (strain ATCC 204508 / S288c) (Baker's yeast).